The following is a 1551-amino-acid chain: UDP-glucose:glycoprotein glucosyltransferase 1 (1551 aa).

An N-terminal signal peptide occupies residues 1–42 (MCSRGDANTADAAAARRVTGLRYNMRLLIALALPCLFSLAEA). N-linked (GlcNAc...) asparagine glycosylation is found at asparagine 269, asparagine 536, and asparagine 1228. The tract at residues 1244–1551 (KAEEVKQDKD…QEGSQKHEEL (308 aa)) is glucosyltransferase. Position 1277 is a phosphoserine (serine 1277). Residues 1531 to 1551 (KELGTLHTEETQEGSQKHEEL) form a disordered region. The short motif at 1548–1551 (HEEL) is the Prevents secretion from ER element.

Belongs to the glycosyltransferase 8 family. In terms of assembly, monomer as well as in a tight complex with SELENOF. Interacts with METTL23. Part of a large chaperone multiprotein complex comprising DNAJB11, HSP90B1, HSPA5, HYOU, PDIA2, PDIA4, PDIA6, PPIB, SDF2L1, UGGT1 and very small amounts of ERP29, but not, or at very low levels, CALR nor CANX. It depends on Ca(2+) as a cofactor. Mn(2+) is required as a cofactor.

The protein resides in the endoplasmic reticulum lumen. Its subcellular location is the endoplasmic reticulum-Golgi intermediate compartment. The catalysed reaction is N(4)-(alpha-D-Man-(1-&gt;2)-alpha-D-Man-(1-&gt;2)-alpha-D-Man-(1-&gt;3)-[alpha-D-Man-(1-&gt;2)-alpha-D-Man-(1-&gt;3)-[alpha-D-Man-(1-&gt;2)-alpha-D-Man-(1-&gt;6)]-alpha-D-Man-(1-&gt;6)]-beta-D-Man-(1-&gt;4)-beta-D-GlcNAc-(1-&gt;4)-beta-D-GlcNAc)-L-asparaginyl-[protein] (N-glucan mannose isomer 9A1,2,3B1,2,3) + UDP-alpha-D-glucose = N(4)-(alpha-D-Glc-(1-&gt;3)-alpha-D-Man-(1-&gt;2)-alpha-D-Man-(1-&gt;2)-alpha-D-Man-(1-&gt;3)-[alpha-D-Man-(1-&gt;2)-alpha-D-Man-(1-&gt;3)-[alpha-D-Man-(1-&gt;2)-alpha-D-Man-(1-&gt;6)]-alpha-D-Man-(1-&gt;6)]-beta-D-Man-(1-&gt;4)-beta-D-GlcNAc-(1-&gt;4)-beta-D-GlcNAc)-L-asparaginyl-[protein] + UDP + H(+). Its pathway is protein modification; protein glycosylation. Functionally, recognizes glycoproteins with minor folding defects. Reglucosylates single N-glycans near the misfolded part of the protein, thus providing quality control for protein folding in the endoplasmic reticulum. Reglucosylated proteins are recognized by calreticulin for recycling to the endoplasmic reticulum and refolding or degradation. This Mus musculus (Mouse) protein is UDP-glucose:glycoprotein glucosyltransferase 1 (Uggt1).